Consider the following 209-residue polypeptide: Transcription antitermination protein NusB (209 aa).

Belongs to the NusB family.

Involved in transcription antitermination. Required for transcription of ribosomal RNA (rRNA) genes. Binds specifically to the boxA antiterminator sequence of the ribosomal RNA (rrn) operons. The sequence is that of Transcription antitermination protein NusB from Crocosphaera subtropica (strain ATCC 51142 / BH68) (Cyanothece sp. (strain ATCC 51142)).